The primary structure comprises 635 residues: Threonine--tRNA ligase (635 aa).

In terms of domain architecture, TGS spans 1–61 (MTVVRLPDGT…ETDSDLVLIT (61 aa)). Residues 242-533 (DHRKLGKQLD…LIEHHAGALP (292 aa)) are catalytic. Residues Cys-333, His-384, and His-510 each coordinate Zn(2+).

Belongs to the class-II aminoacyl-tRNA synthetase family. As to quaternary structure, homodimer. It depends on Zn(2+) as a cofactor.

It is found in the cytoplasm. It catalyses the reaction tRNA(Thr) + L-threonine + ATP = L-threonyl-tRNA(Thr) + AMP + diphosphate + H(+). Catalyzes the attachment of threonine to tRNA(Thr) in a two-step reaction: L-threonine is first activated by ATP to form Thr-AMP and then transferred to the acceptor end of tRNA(Thr). Also edits incorrectly charged L-seryl-tRNA(Thr). In Nitrosomonas europaea (strain ATCC 19718 / CIP 103999 / KCTC 2705 / NBRC 14298), this protein is Threonine--tRNA ligase.